The primary structure comprises 453 residues: Bifunctional protein GlmU (453 aa).

Residues 1–226 (MSFSAVILAA…PIEVEGVNNR (226 aa)) are pyrophosphorylase. UDP-N-acetyl-alpha-D-glucosamine-binding positions include 8–11 (LAAG), Lys22, Gln73, 78–79 (GT), 100–102 (YGD), Gly137, Glu151, Asn166, and Asn224. A Mg(2+)-binding site is contributed by Asp102. Residue Asn224 coordinates Mg(2+). The segment at 227–247 (IQLARLERAYQAMQAERLLEQ) is linker. The segment at 248-453 (GVMLRDPSRF…KGWKRPVKQK (206 aa)) is N-acetyltransferase. Residues Arg330 and Lys348 each contribute to the UDP-N-acetyl-alpha-D-glucosamine site. His360 serves as the catalytic Proton acceptor. UDP-N-acetyl-alpha-D-glucosamine contacts are provided by Tyr363 and Asn374. Residues Ala377, 383 to 384 (NY), Ser402, Ala420, and Arg437 each bind acetyl-CoA.

In the N-terminal section; belongs to the N-acetylglucosamine-1-phosphate uridyltransferase family. It in the C-terminal section; belongs to the transferase hexapeptide repeat family. As to quaternary structure, homotrimer. Mg(2+) is required as a cofactor.

It is found in the cytoplasm. It catalyses the reaction alpha-D-glucosamine 1-phosphate + acetyl-CoA = N-acetyl-alpha-D-glucosamine 1-phosphate + CoA + H(+). The catalysed reaction is N-acetyl-alpha-D-glucosamine 1-phosphate + UTP + H(+) = UDP-N-acetyl-alpha-D-glucosamine + diphosphate. It functions in the pathway nucleotide-sugar biosynthesis; UDP-N-acetyl-alpha-D-glucosamine biosynthesis; N-acetyl-alpha-D-glucosamine 1-phosphate from alpha-D-glucosamine 6-phosphate (route II): step 2/2. The protein operates within nucleotide-sugar biosynthesis; UDP-N-acetyl-alpha-D-glucosamine biosynthesis; UDP-N-acetyl-alpha-D-glucosamine from N-acetyl-alpha-D-glucosamine 1-phosphate: step 1/1. Its pathway is bacterial outer membrane biogenesis; LPS lipid A biosynthesis. In terms of biological role, catalyzes the last two sequential reactions in the de novo biosynthetic pathway for UDP-N-acetylglucosamine (UDP-GlcNAc). The C-terminal domain catalyzes the transfer of acetyl group from acetyl coenzyme A to glucosamine-1-phosphate (GlcN-1-P) to produce N-acetylglucosamine-1-phosphate (GlcNAc-1-P), which is converted into UDP-GlcNAc by the transfer of uridine 5-monophosphate (from uridine 5-triphosphate), a reaction catalyzed by the N-terminal domain. This Photobacterium profundum (strain SS9) protein is Bifunctional protein GlmU.